The chain runs to 90 residues: Mu-theraphotoxin-Phlo1b (90 aa).

Residues 1–22 (MKVSVLITLAVLGVMFVWTSAA) form the signal peptide. The propeptide occupies 23–50 (EQEDHGSDRRDSPALLKSLGRVFQSEER). Disulfide bonds link C52–C66, C59–C71, and C65–C79. F85 is subject to Phenylalanine amide. The propeptide occupies 86–90 (GNEKS).

This sequence belongs to the neurotoxin 10 (Hwtx-1) family. 39 (Jztx-34) subfamily. Expressed by the venom gland.

It is found in the secreted. Gating-modifier toxin that inhibits voltage-gated sodium channel Nav by shifting the threshold for channel activation to more positive potentials. This toxin moderately inhibits human Nav1.7/SCN9A (IC(50)=360 nM) and weakly inhibits hNav1.2/SCN2A (37% inhibition at 1 uM peptide) and hNav1.5/SCN5A (&lt;20% inhibition at 1 uM peptide). Inhibition of Nav1.7 is voltage-dependent, with lower inhibition at more positive test pulses. This is Mu-theraphotoxin-Phlo1b from Phlogius sp. (Tarantula spider).